We begin with the raw amino-acid sequence, 239 residues long: Ribosomal RNA small subunit methyltransferase G (239 aa).

S-adenosyl-L-methionine is bound by residues Gly-77, Phe-82, 128–129, and Arg-146; that span reads AE. Residues 215-239 form a disordered region; the sequence is DKKRQTPKKYPRKPGTPNKTPLLEK.

Belongs to the methyltransferase superfamily. RNA methyltransferase RsmG family.

It is found in the cytoplasm. In terms of biological role, specifically methylates the N7 position of guanine in position 535 of 16S rRNA. This is Ribosomal RNA small subunit methyltransferase G from Staphylococcus aureus (strain bovine RF122 / ET3-1).